We begin with the raw amino-acid sequence, 553 residues long: CTP synthase (553 aa).

Positions 1 to 266 (MTKNYIFITG…DNYICEYFKL (266 aa)) are amidoligase domain. Position 14 (Ser-14) interacts with CTP. Ser-14 serves as a coordination point for UTP. Residues 15–20 (SLGKGI) and Asp-72 each bind ATP. Mg(2+)-binding residues include Asp-72 and Glu-140. CTP is bound by residues 147–149 (DIE), 187–192 (KTKPTQ), and Lys-223. Residues 187–192 (KTKPTQ) and Lys-223 contribute to the UTP site. Residue 239-241 (KDV) coordinates ATP. Positions 291-544 (IIGIIGKYIK…IKSAKKNKKN (254 aa)) constitute a Glutamine amidotransferase type-1 domain. Residue Gly-352 participates in L-glutamine binding. Cys-379 acts as the Nucleophile; for glutamine hydrolysis in catalysis. Residues 380–383 (LGMQ), Glu-403, and Arg-472 each bind L-glutamine. Residues His-517 and Glu-519 contribute to the active site.

It belongs to the CTP synthase family. In terms of assembly, homotetramer.

It catalyses the reaction UTP + L-glutamine + ATP + H2O = CTP + L-glutamate + ADP + phosphate + 2 H(+). The catalysed reaction is L-glutamine + H2O = L-glutamate + NH4(+). The enzyme catalyses UTP + NH4(+) + ATP = CTP + ADP + phosphate + 2 H(+). The protein operates within pyrimidine metabolism; CTP biosynthesis via de novo pathway; CTP from UDP: step 2/2. Its activity is regulated as follows. Allosterically activated by GTP, when glutamine is the substrate; GTP has no effect on the reaction when ammonia is the substrate. The allosteric effector GTP functions by stabilizing the protein conformation that binds the tetrahedral intermediate(s) formed during glutamine hydrolysis. Inhibited by the product CTP, via allosteric rather than competitive inhibition. Functionally, catalyzes the ATP-dependent amination of UTP to CTP with either L-glutamine or ammonia as the source of nitrogen. Regulates intracellular CTP levels through interactions with the four ribonucleotide triphosphates. This is CTP synthase from Buchnera aphidicola subsp. Schizaphis graminum (strain Sg).